The sequence spans 555 residues: WRKY transcription factor WRKY24 (555 aa).

Disordered regions lie at residues threonine 133–asparagine 183 and serine 197–proline 248. Residues glutamine 163–asparagine 183 show a composition bias toward low complexity. Positions serine 214–proline 278 form a DNA-binding region, WRKY 1. The short motif at lysine 253–serine 259 is the Nuclear localization signal element. Residues lysine 270 to asparagine 365 form a disordered region. Polar residues-rich tracts occupy residues lysine 277–glutamine 294 and threonine 310–serine 320. The span at aspartate 347 to aspartate 356 shows a compositional bias: basic and acidic residues. Positions serine 379–proline 444 form a DNA-binding region, WRKY 2. The segment at histidine 466–tyrosine 555 is transcription repression of gibberellic acid (GA)-induced promoters. The tract at residues phenylalanine 514–tyrosine 555 is disordered.

It belongs to the WRKY group II-a family. In terms of tissue distribution, expressed in aleurone cells. Mostly expressed in aleurone layers and leaves, and, to a lower extent, in roots, panicles and embryos.

It is found in the nucleus. In terms of biological role, transcription activator. Interacts specifically with the W box (5'-(T)TGAC[CT]-3'), a frequently occurring elicitor-responsive cis-acting element. Negative regulator of both gibberellic acid (GA) and abscisic acid (ABA) signaling in aleurone cells, probably by interfering with GAM1, via the specific repression of GA- and ABA-induced promoters. In Oryza sativa subsp. japonica (Rice), this protein is WRKY transcription factor WRKY24.